The sequence spans 896 residues: MYCRESLSSLQTLNVAKSLSSLFPKQSALINPISAGRRNNLPRPNLRRRCKVTASRANIEQEGNTVKEPIQNIKVKGYITAQEEFLEGITWSRGLDDIADIRGRSLLVELISAKTDQRITVEDYAQRVWAEAPDEKYECEFEMPEDFGPVGAIKIQNQYHRQLFLKGVELKLPGGSITFTCESWVAPKSVDPTKRIFFSDKSYLPSQTPEPLKKYRKEELETLQGKNREEVGEFTKFERIYDYDVYNDVGDPDNDPELARPVIGGLTHPYPRRCKTGRKPCETDPSSEQRYGGEFYVPRDEEFSTAKGTSFTGKAVLAALPSIFPQIESVLLSPQEPFPHFKAIQNLFEEGIQLPKDAGLLPLLPRIIKALGEAQDDILQFDAPVLINRDRFSWLRDDEFARQTLAGLNPYSIQLVEEWPLISKLDPAVYGDPTSLITWEIVEREVKGNMTVDEALKNKRLFVLDYHDLLLPYVNKVRELNNTTLYASRTLFFLSDDSTLRPVAIELTCPPNINKPQWKQVFTPGYDATSCWLWNLAKTHAISHDAGYHQLISHWLRTHACTEPYIIAANRQLSAMHPIYRLLHPHFRYTMEINARARQSLVNGGGIIETCFWPGKYALELSSAVYGKLWRFDQEGLPADLIKRGLAEEDKTAEHGVRLTIPDYPFANDGLILWDAIKEWVTDYVKHYYPDEELITSDEELQGWWSEVRNIGHGDKKDEPWWPVLKTQDDLIGVVTTIAWVTSGHHAAVNFGQYGYGGYFPNRPTTTRIRMPTEDPTDEALKEFYESPEKVLLKTYPSQKQATLVMVTLDLLSTHSPDEEYIGEQQEASWANEPVINAAFERFKGKLQYLEGVIDERNVNITLKNRAGAGVVKYELLKPTSEHGVTGMGVPYSISI.

A chloroplast-targeting transit peptide spans 1 to 56; it reads MYCRESLSSLQTLNVAKSLSSLFPKQSALINPISAGRRNNLPRPNLRRRCKVTASR. In terms of domain architecture, PLAT spans 79 to 199; it reads ITAQEEFLEG…VDPTKRIFFS (121 aa). Residues 175–232 are EIF4E2 binding; the sequence is GSITFTCESWVAPKSVDPTKRIFFSDKSYLPSQTPEPLKKYRKEELETLQGKNREEVG. The Lipoxygenase domain occupies 202 to 896; it reads SYLPSQTPEP…GMGVPYSISI (695 aa). Fe cation-binding residues include His554, His559, His746, Asn750, and Ile896.

Belongs to the lipoxygenase family. In terms of assembly, interacts with EIF4E2. It depends on Fe cation as a cofactor. In terms of tissue distribution, in leaves and inflorescences but not abundant in seeds, roots and stems.

The protein resides in the plastid. It localises to the chloroplast. Its subcellular location is the cytoplasm. The enzyme catalyses (9Z,12Z)-octadecadienoate + O2 = (13S)-hydroperoxy-(9Z,11E)-octadecadienoate. It carries out the reaction (9Z,12Z,15Z)-octadecatrienoate + O2 = (13S)-hydroperoxy-(9Z,11E,15Z)-octadecatrienoate. It participates in lipid metabolism; oxylipin biosynthesis. Functionally, 13S-lipoxygenase that can use linolenic acid as substrates. Plant lipoxygenases may be involved in a number of diverse aspects of plant physiology including growth and development, pest resistance, and senescence or responses to wounding. Catalyzes the hydroperoxidation of lipids containing a cis,cis-1,4-pentadiene structure. Required for the wound-induced synthesis of jasmonic acid (JA) in leaves. The protein is Lipoxygenase 2, chloroplastic (LOX2) of Arabidopsis thaliana (Mouse-ear cress).